Here is a 113-residue protein sequence, read N- to C-terminus: Iron-sulfur cluster insertion protein ErpA (113 aa).

Iron-sulfur cluster contacts are provided by Cys-41, Cys-105, and Cys-107.

Belongs to the HesB/IscA family. As to quaternary structure, homodimer. It depends on iron-sulfur cluster as a cofactor.

Functionally, required for insertion of 4Fe-4S clusters for at least IspG. The chain is Iron-sulfur cluster insertion protein ErpA from Histophilus somni (strain 129Pt) (Haemophilus somnus).